The sequence spans 447 residues: UDP-N-acetyl-alpha-D-muramoyl-L-alanyl-L-glutamate epimerase (447 aa).

This sequence belongs to the MurL family.

It catalyses the reaction UDP-N-acetyl-alpha-D-muramoyl-L-alanyl-L-glutamate + ATP + H2O = UDP-N-acetyl-alpha-D-muramoyl-L-alanyl-D-glutamate + AMP + diphosphate + H(+). The protein operates within cell wall biogenesis; peptidoglycan biosynthesis. Functionally, cell wall formation. Catalyzes epimerization of the terminal L-glutamate in UDP-N-acetyl-alpha-D-muramoyl-L-alanyl-L-glutamate. The sequence is that of UDP-N-acetyl-alpha-D-muramoyl-L-alanyl-L-glutamate epimerase from Micromonospora sp. (strain ATCC 39149 / NRRL 15099 / SCC 1413).